Consider the following 339-residue polypeptide: Methylthioribose-1-phosphate isomerase (339 aa).

Residues 52-54 (RGA), Arg-89, and Gln-188 contribute to the substrate site. The Proton donor role is filled by Asp-229. 239-240 (NK) provides a ligand contact to substrate.

It belongs to the eIF-2B alpha/beta/delta subunits family. MtnA subfamily.

The enzyme catalyses 5-(methylsulfanyl)-alpha-D-ribose 1-phosphate = 5-(methylsulfanyl)-D-ribulose 1-phosphate. It functions in the pathway amino-acid biosynthesis; L-methionine biosynthesis via salvage pathway; L-methionine from S-methyl-5-thio-alpha-D-ribose 1-phosphate: step 1/6. Catalyzes the interconversion of methylthioribose-1-phosphate (MTR-1-P) into methylthioribulose-1-phosphate (MTRu-1-P). The chain is Methylthioribose-1-phosphate isomerase from Anaeromyxobacter dehalogenans (strain 2CP-C).